The following is a 358-amino-acid chain: Alanine racemase (358 aa).

Lysine 35 (proton acceptor; specific for D-alanine) is an active-site residue. At lysine 35 the chain carries N6-(pyridoxal phosphate)lysine. A substrate-binding site is contributed by arginine 130. The active-site Proton acceptor; specific for L-alanine is tyrosine 255. Methionine 303 provides a ligand contact to substrate.

The protein belongs to the alanine racemase family. Requires pyridoxal 5'-phosphate as cofactor.

It catalyses the reaction L-alanine = D-alanine. Its pathway is amino-acid biosynthesis; D-alanine biosynthesis; D-alanine from L-alanine: step 1/1. Catalyzes the interconversion of L-alanine and D-alanine. May also act on other amino acids. The polypeptide is Alanine racemase (alr) (Shewanella piezotolerans (strain WP3 / JCM 13877)).